A 336-amino-acid chain; its full sequence is Inositol 2-dehydrogenase (336 aa).

This sequence belongs to the Gfo/Idh/MocA family. In terms of assembly, homotetramer.

The catalysed reaction is myo-inositol + NAD(+) = scyllo-inosose + NADH + H(+). Its function is as follows. Involved in the oxidation of myo-inositol (MI) to 2-keto-myo-inositol (2KMI or 2-inosose). The sequence is that of Inositol 2-dehydrogenase from Acidiphilium cryptum (strain JF-5).